Here is a 379-residue protein sequence, read N- to C-terminus: Cytochrome b (379 aa).

4 consecutive transmembrane segments (helical) span residues 33-53 (FGSLLGACLTIQVITGLFLAM), 77-98 (WTIRYLHANGASMFFMCLFIHV), 113-133 (WNIGIMLLFSVMATAFMGYVL), and 178-198 (FFALHFILPFIISALAMIHLL). Heme b-binding residues include histidine 83 and histidine 97. Histidine 182 and histidine 196 together coordinate heme b. Histidine 201 provides a ligand contact to a ubiquinone. 4 helical membrane passes run 226 to 246 (TKDFLGLLLLILLLMTLTLFY), 288 to 308 (PGGVVALILSILILAIIPFLQ), 320 to 340 (LSQFLFWILVADLLTLTWIGG), and 347 to 367 (FISIGQTASILYFSLMVFIMP).

The protein belongs to the cytochrome b family. In terms of assembly, the cytochrome bc1 complex contains 11 subunits: 3 respiratory subunits (MT-CYB, CYC1 and UQCRFS1), 2 core proteins (UQCRC1 and UQCRC2) and 6 low-molecular weight proteins (UQCRH/QCR6, UQCRB/QCR7, UQCRQ/QCR8, UQCR10/QCR9, UQCR11/QCR10 and a cleavage product of UQCRFS1). This cytochrome bc1 complex then forms a dimer. Requires heme b as cofactor.

It localises to the mitochondrion inner membrane. Its function is as follows. Component of the ubiquinol-cytochrome c reductase complex (complex III or cytochrome b-c1 complex) that is part of the mitochondrial respiratory chain. The b-c1 complex mediates electron transfer from ubiquinol to cytochrome c. Contributes to the generation of a proton gradient across the mitochondrial membrane that is then used for ATP synthesis. In Lepilemur ruficaudatus (Red-tailed sportive lemur), this protein is Cytochrome b (MT-CYB).